The sequence spans 148 residues: Glutamyl-tRNA(Gln) amidotransferase subunit C, mitochondrial (148 aa).

Belongs to the GatC family. Subunit of the heterotrimeric GatCAB amidotransferase (AdT) complex, composed of A, B and C subunits.

It localises to the mitochondrion. The catalysed reaction is L-glutamyl-tRNA(Gln) + L-glutamine + ATP + H2O = L-glutaminyl-tRNA(Gln) + L-glutamate + ADP + phosphate + H(+). Allows the formation of correctly charged Gln-tRNA(Gln) through the transamidation of misacylated Glu-tRNA(Gln) in the mitochondria. The reaction takes place in the presence of glutamine and ATP through an activated gamma-phospho-Glu-tRNA(Gln). This Drosophila melanogaster (Fruit fly) protein is Glutamyl-tRNA(Gln) amidotransferase subunit C, mitochondrial.